The primary structure comprises 1174 residues: Fanconi anemia group J protein homolog (1174 aa).

The Helicase ATP-binding domain occupies 11–445 (GGVKIHFPCR…KSHEPLRDVC (435 aa)). Residues 101 to 126 (NLDTSPHFNSPSKPSSGRNGVSTPCQ) show a composition bias toward polar residues. 2 disordered regions span residues 101–160 (NLDT…EKKR) and 187–208 (LASE…DRKD). Residues 134–143 (LAAKLSAKKQ) are compositionally biased toward low complexity. Residues 158–175 (KKRIRPLETTQQIRKRHC) carry the Nuclear localization signal motif. Position 185-192 (185-192 (ARLASEKR)) interacts with ATP. Residues Cys-286, Cys-301, Cys-313, and Cys-353 each contribute to the [4Fe-4S] cluster site. Positions 393–396 (VILD) match the DEAH box motif. The interval 888 to 1063 (SRRHQKVTNR…SNETADTSLG (176 aa)) is interaction with BRCA1. Composition is skewed to polar residues over residues 923 to 935 (TSVS…SPEN) and 990 to 1001 (SRSSSPTFGKQT). 2 disordered regions span residues 923–1001 (TSVS…GKQT) and 1102–1155 (LSPG…SSHS). Phosphoserine is present on residues Ser-929, Ser-932, and Ser-994. Residues 1138-1147 (DTNEENGELV) are compositionally biased toward acidic residues. Lys-1174 bears the N6-acetyllysine mark.

The protein belongs to the DEAD box helicase family. DEAH subfamily. Binds directly to the BRCT domains of BRCA1. Interacts with the CIA complex components CIAO1, CIAO2B and MMS19. The cofactor is [4Fe-4S] cluster. Post-translationally, phosphorylated. Phosphorylation is necessary for interaction with BRCA1, and is cell-cycle regulated.

The protein localises to the nucleus. Its subcellular location is the cytoplasm. It catalyses the reaction Couples ATP hydrolysis with the unwinding of duplex DNA at the replication fork by translocating in the 5'-3' direction. This creates two antiparallel DNA single strands (ssDNA). The leading ssDNA polymer is the template for DNA polymerase III holoenzyme which synthesizes a continuous strand.. The enzyme catalyses ATP + H2O = ADP + phosphate + H(+). DNA-dependent helicase and 5' to 3' DNA helicase required for the maintenance of chromosomal stability. Acts late in the Fanconi anemia pathway, after FANCD2 ubiquitination. Involved in the repair of DNA double-strand breaks by homologous recombination in a manner that depends on its association with BRCA1. Involved in the repair of abasic sites at replication forks by promoting the degradation of DNA-protein cross-links: acts by catalyzing unfolding of HMCES DNA-protein cross-link via its helicase activity, exposing the underlying DNA and enabling cleavage of the DNA-protein adduct by the SPRTN metalloprotease. Can unwind RNA:DNA hybrids and G-quadruplex DNA. This chain is Fanconi anemia group J protein homolog, found in Mus musculus (Mouse).